The sequence spans 218 residues: LexA repressor (218 aa).

The H-T-H motif DNA-binding region spans 28-48 (RAEIAAEFGFSSPNSAEEHLR). Residues S136 and K173 each act as for autocatalytic cleavage activity in the active site.

This sequence belongs to the peptidase S24 family. In terms of assembly, homodimer.

The catalysed reaction is Hydrolysis of Ala-|-Gly bond in repressor LexA.. Functionally, represses a number of genes involved in the response to DNA damage (SOS response), including recA and lexA. In the presence of single-stranded DNA, RecA interacts with LexA causing an autocatalytic cleavage which disrupts the DNA-binding part of LexA, leading to derepression of the SOS regulon and eventually DNA repair. The sequence is that of LexA repressor from Cupriavidus metallidurans (strain ATCC 43123 / DSM 2839 / NBRC 102507 / CH34) (Ralstonia metallidurans).